The chain runs to 156 residues: 3-dehydroquinate dehydratase (156 aa).

Tyrosine 24 functions as the Proton acceptor in the catalytic mechanism. The substrate site is built by asparagine 76, histidine 82, and aspartate 89. The active-site Proton donor is histidine 102. Residues 103–104 (IS) and arginine 113 each bind substrate.

It belongs to the type-II 3-dehydroquinase family. Homododecamer.

It catalyses the reaction 3-dehydroquinate = 3-dehydroshikimate + H2O. It participates in metabolic intermediate biosynthesis; chorismate biosynthesis; chorismate from D-erythrose 4-phosphate and phosphoenolpyruvate: step 3/7. In terms of biological role, catalyzes a trans-dehydration via an enolate intermediate. This Nitrobacter winogradskyi (strain ATCC 25391 / DSM 10237 / CIP 104748 / NCIMB 11846 / Nb-255) protein is 3-dehydroquinate dehydratase.